A 281-amino-acid polypeptide reads, in one-letter code: Oxidase pynE (281 aa).

This sequence belongs to the avfA family.

The protein operates within secondary metabolite biosynthesis. Its function is as follows. Oxidase; part of the gene cluster that mediates the biosynthesis of pyranonigrins, a family of antioxidative compounds. The first step of pyranonigrins biosynthesis is performed by the hybrid PKS-NRPS synthetase that condenses 6 malonyl-CoA units to an acetyl starter unit, to form a 1,3,5-trioxotetradecane-6,8-dienyl-ACP. The enoyl reductase (ER) domain of pynA is likely to be functional during the first two rounds of polyketide chain extension, to generate the saturated C-C bonds of the alkyl side chain. PynA subsequently forms the amide bond between the acyl chain and L-serine. Although pynA has a terminal reductase domain, it appears to require the thioesterase pynI for the release of the straight-chain intermediate from pynA via the formation of a tetramic acid pyranonigrin J. The methyltransferase pynC then coverts pyranonigrin J to pyranonigrin I via N-methylation. The FAD-dependent monooxygenase pynG catalyzes an epoxidation-mediated cyclization to form the dihydro-gamma-pyrone moiety, followed by pynD-catalyzed oxidation of the alcohol to the ketone and enolization to yield the characteristic tetramic acid-fused gamma-pyrone core of pyranonigrin H. Pyranonigrin H is substrate of pynH for dehydration-mediated exo-methylene formation from the serine side chain to produce pyranonigrin E, before the oxidase pynE reduces the exo-methylene of pyranonigrin E into a pendant methyl to form pyranonigrin G. The FAD-linked oxidoreductase pynB performs the reverse reaction and converts pyranonigrin G back to pyranonigrin E. This Aspergillus niger (strain ATCC MYA-4892 / CBS 513.88 / FGSC A1513) protein is Oxidase pynE.